Reading from the N-terminus, the 56-residue chain is Small ribosomal subunit protein uS14 (56 aa).

Zn(2+) is bound by residues Cys-21, Cys-24, Cys-39, and Cys-42.

Belongs to the universal ribosomal protein uS14 family. Component of the small ribosomal subunit. Mature ribosomes consist of a small (40S) and a large (60S) subunit. The 40S subunit contains about 32 different proteins and 1 molecule of RNA (18S). The 60S subunit contains 45 different proteins and 3 molecules of RNA (25S, 5.8S and 5S). It depends on Zn(2+) as a cofactor.

Its subcellular location is the cytoplasm. Component of the ribosome, a large ribonucleoprotein complex responsible for the synthesis of proteins in the cell. The small ribosomal subunit (SSU) binds messenger RNAs (mRNAs) and translates the encoded message by selecting cognate aminoacyl-transfer RNA (tRNA) molecules. The large subunit (LSU) contains the ribosomal catalytic site termed the peptidyl transferase center (PTC), which catalyzes the formation of peptide bonds, thereby polymerizing the amino acids delivered by tRNAs into a polypeptide chain. The nascent polypeptides leave the ribosome through a tunnel in the LSU and interact with protein factors that function in enzymatic processing, targeting, and the membrane insertion of nascent chains at the exit of the ribosomal tunnel. The protein is Small ribosomal subunit protein uS14 of Candida albicans (strain SC5314 / ATCC MYA-2876) (Yeast).